Reading from the N-terminus, the 62-residue chain is Photosystem II reaction center protein Z (62 aa).

A run of 2 helical transmembrane segments spans residues A8 to A28 and F41 to I61.

The protein belongs to the PsbZ family. As to quaternary structure, PSII is composed of 1 copy each of membrane proteins PsbA, PsbB, PsbC, PsbD, PsbE, PsbF, PsbH, PsbI, PsbJ, PsbK, PsbL, PsbM, PsbT, PsbY, PsbZ, Psb30/Ycf12, at least 3 peripheral proteins of the oxygen-evolving complex and a large number of cofactors. It forms dimeric complexes.

Its subcellular location is the plastid. It is found in the chloroplast thylakoid membrane. Functionally, may control the interaction of photosystem II (PSII) cores with the light-harvesting antenna, regulates electron flow through the 2 photosystem reaction centers. PSII is a light-driven water plastoquinone oxidoreductase, using light energy to abstract electrons from H(2)O, generating a proton gradient subsequently used for ATP formation. The polypeptide is Photosystem II reaction center protein Z (Drimys granadensis).